The sequence spans 3739 residues: Pikromycin polyketide synthase component PikAII (3739 aa).

Positions 35–463 (GEPVAIVGMA…GTNAHVVLEE (429 aa)) constitute a Ketosynthase family 3 (KS3) 1 domain. 2 module regions span residues 38–1517 (VAIV…EFLL) and 1542–3642 (VAIV…GHLL). The Acyl-thioester intermediate; for beta-ketoacyl synthase 1 activity role is filled by C208. Catalysis depends on for beta-ketoacyl synthase 1 activity residues H343 and H383. Residues 572–877 (FVFPGQGTQW…ERLVTSLAEA (306 aa)) form an acyltransferase 1 region. S662 functions as the Acyl-ester intermediate; for acyltransferase 1 activity in the catalytic mechanism. Residues 1150–1343 (GTVLVTGAEE…VTSVAWSPWE (194 aa)) are C2-type beta-ketoacyl reductase 1. The active-site For C2-type beta-ketoacyl reductase 1 and probable racemase activities is the Y1313. Residues 1445–1520 (RRMQELVREH…TLAEFLLAEI (76 aa)) form the Carrier 1 domain. Position 1480 is an O-(pantetheine 4'-phosphoryl)serine (S1480). The 429-residue stretch at 1539–1967 (DEPVAIVGMA…GTNAHIVLEE (429 aa)) folds into the Ketosynthase family 3 (KS3) 2 domain. C1712 serves as the catalytic Acyl-thioester intermediate; for beta-ketoacyl synthase 2 activity. Active-site for beta-ketoacyl synthase 2 activity residues include H1847 and H1887. The acyltransferase 2 stretch occupies residues 2069 to 2374 (FVFPGQGTQW…HRLTTSLAEA (306 aa)). S2159 acts as the Acyl-ester intermediate; for acyltransferase 2 activity in catalysis. Residues 2428 to 2553 (HPLLGAAVAL…GVLAARADRT (126 aa)) are N-terminal hotdog fold. Positions 2428–2703 (HPLLGAAVAL…LTVLPVDPAQ (276 aa)) are dehydratase. Residues 2428–2705 (HPLLGAAVAL…VLPVDPAQLA (278 aa)) form the PKS/mFAS DH domain. Residue H2460 is the Proton acceptor; for dehydratase activity of the active site. Residues 2567–2705 (AEPVDVDGLY…VLPVDPAQLA (139 aa)) are C-terminal hotdog fold. The active-site Proton donor; for dehydratase activity is D2629. Residues 2959 to 3267 (GSLESLTAAP…QARHTGKVVL (309 aa)) form an enoyl reductase region. Y3005 (for enoyl reductase activity) is an active-site residue. NADP(+) contacts are provided by residues 3092–3109 (LLVH…VQLA), 3285–3288 (TGAL), 3309–3312 (SRRG), 3338–3339 (DV), K3388, and 3412–3413 (FS). Residues 3277-3458 (GTVLLTGGTG…LSLGWGLWAE (182 aa)) form a beta-ketoacyl reductase 2 region. Y3427 (for beta-ketoacyl reductase 2 activity) is an active-site residue. Residues 3570–3645 (AHLRDLVRTH…ELAGHLLDEL (76 aa)) enclose the Carrier 2 domain. At S3605 the chain carries O-(pantetheine 4'-phosphoryl)serine.

Homodimer. Pikromycin PKS consists of a combination of multimodular (PikAI and PikAII) and monomodular (PikAIII and PikAIV) polypeptides each coding for a functional synthase subunit which participates in 1 (monomodular) or 2 (multimodular) of the six FAS-like elongation steps required for formation of the polyketide. Module 1, 2, 3, 4, 5, and 6 participating in biosynthesis steps 1, 2, 3, 4, 5, and 6, respectively. Requires pantetheine 4'-phosphate as cofactor.

The enzyme catalyses 5 (S)-methylmalonyl-CoA + malonyl-CoA + 5 NADPH + 11 H(+) = 10-deoxymethynolide + 6 CO2 + 5 NADP(+) + 6 CoA + 2 H2O. The catalysed reaction is 6 (S)-methylmalonyl-CoA + malonyl-CoA + 5 NADPH + 12 H(+) = narbonolide + 7 CO2 + 5 NADP(+) + 7 CoA + 2 H2O. It participates in antibiotic biosynthesis. In terms of biological role, involved in the biosynthesis of 12- and 14-membered ring macrolactone antibiotics such as methymycin/neomethymycin and pikromycin/narbomycin, respectively. Component of the pikromycin PKS which catalyzes the biosynthesis of both precursors 10-deoxymethynolide (12-membered ring macrolactone) and narbonolide (14-membered ring macrolactone). Chain elongation through PikAI, PikAII and PikAIII followed by thioesterase catalyzed termination results in the production of 10-deoxymethynolide, while continued elongation through PikAIV, followed by thioesterase (TE) catalyzed cyclization results in the biosynthesis of the narbonolide. The protein is Pikromycin polyketide synthase component PikAII of Streptomyces venezuelae.